The sequence spans 186 residues: Elongation factor P (186 aa).

This sequence belongs to the elongation factor P family.

It localises to the cytoplasm. It participates in protein biosynthesis; polypeptide chain elongation. Involved in peptide bond synthesis. Stimulates efficient translation and peptide-bond synthesis on native or reconstituted 70S ribosomes in vitro. Probably functions indirectly by altering the affinity of the ribosome for aminoacyl-tRNA, thus increasing their reactivity as acceptors for peptidyl transferase. The sequence is that of Elongation factor P from Neisseria meningitidis serogroup A / serotype 4A (strain DSM 15465 / Z2491).